The primary structure comprises 224 residues: Proteasome subunit beta (224 aa).

The propeptide at 1 to 6 is removed in mature form; by autocatalysis; it reads MDVMKG. The active-site Nucleophile is the threonine 7.

This sequence belongs to the peptidase T1B family. As to quaternary structure, the 20S proteasome core is composed of 14 alpha and 14 beta subunits that assemble into four stacked heptameric rings, resulting in a barrel-shaped structure. The two inner rings, each composed of seven catalytic beta subunits, are sandwiched by two outer rings, each composed of seven alpha subunits. The catalytic chamber with the active sites is on the inside of the barrel. Has a gated structure, the ends of the cylinder being occluded by the N-termini of the alpha-subunits. Is capped at one or both ends by the proteasome regulatory ATPase, PAN.

Its subcellular location is the cytoplasm. It carries out the reaction Cleavage of peptide bonds with very broad specificity.. The formation of the proteasomal ATPase PAN-20S proteasome complex, via the docking of the C-termini of PAN into the intersubunit pockets in the alpha-rings, triggers opening of the gate for substrate entry. Interconversion between the open-gate and close-gate conformations leads to a dynamic regulation of the 20S proteasome proteolysis activity. Component of the proteasome core, a large protease complex with broad specificity involved in protein degradation. This chain is Proteasome subunit beta, found in Methanocaldococcus fervens (strain DSM 4213 / JCM 15782 / AG86) (Methanococcus fervens).